We begin with the raw amino-acid sequence, 277 residues long: Thiazole synthase (277 aa).

Catalysis depends on K116, which acts as the Schiff-base intermediate with DXP. Residues G177, 203 to 204 (AG), and 225 to 226 (NT) contribute to the 1-deoxy-D-xylulose 5-phosphate site.

It belongs to the ThiG family. Homotetramer. Forms heterodimers with either ThiH or ThiS.

It localises to the cytoplasm. It catalyses the reaction [ThiS sulfur-carrier protein]-C-terminal-Gly-aminoethanethioate + 2-iminoacetate + 1-deoxy-D-xylulose 5-phosphate = [ThiS sulfur-carrier protein]-C-terminal Gly-Gly + 2-[(2R,5Z)-2-carboxy-4-methylthiazol-5(2H)-ylidene]ethyl phosphate + 2 H2O + H(+). Its pathway is cofactor biosynthesis; thiamine diphosphate biosynthesis. Catalyzes the rearrangement of 1-deoxy-D-xylulose 5-phosphate (DXP) to produce the thiazole phosphate moiety of thiamine. Sulfur is provided by the thiocarboxylate moiety of the carrier protein ThiS. In vitro, sulfur can be provided by H(2)S. This chain is Thiazole synthase, found in Thermosynechococcus vestitus (strain NIES-2133 / IAM M-273 / BP-1).